The primary structure comprises 337 residues: Quinolinate synthase (337 aa).

2 residues coordinate iminosuccinate: His40 and Ser57. Cys102 contacts [4Fe-4S] cluster. Iminosuccinate-binding positions include 128 to 130 and Ser145; that span reads YVN. Residue Cys189 participates in [4Fe-4S] cluster binding. Iminosuccinate is bound by residues 215-217 and Thr243; that span reads HPE. Cys288 provides a ligand contact to [4Fe-4S] cluster.

This sequence belongs to the quinolinate synthase family. Type 2 subfamily. Requires [4Fe-4S] cluster as cofactor.

The protein localises to the cytoplasm. The catalysed reaction is iminosuccinate + dihydroxyacetone phosphate = quinolinate + phosphate + 2 H2O + H(+). Its pathway is cofactor biosynthesis; NAD(+) biosynthesis; quinolinate from iminoaspartate: step 1/1. Catalyzes the condensation of iminoaspartate with dihydroxyacetone phosphate to form quinolinate. The polypeptide is Quinolinate synthase (Mycobacterium sp. (strain JLS)).